A 388-amino-acid chain; its full sequence is Succinate--CoA ligase [ADP-forming] subunit beta (388 aa).

The ATP-grasp domain maps to 9–245 (KALLKKYGVS…KSQENERELK (237 aa)). ATP is bound by residues K46, 53–55 (GRG), E100, Y103, and E108. Positions 200 and 214 each coordinate Mg(2+). Substrate contacts are provided by residues N265 and 322 to 324 (GIV).

Belongs to the succinate/malate CoA ligase beta subunit family. As to quaternary structure, heterotetramer of two alpha and two beta subunits. Requires Mg(2+) as cofactor.

It catalyses the reaction succinate + ATP + CoA = succinyl-CoA + ADP + phosphate. The enzyme catalyses GTP + succinate + CoA = succinyl-CoA + GDP + phosphate. Its pathway is carbohydrate metabolism; tricarboxylic acid cycle; succinate from succinyl-CoA (ligase route): step 1/1. Succinyl-CoA synthetase functions in the citric acid cycle (TCA), coupling the hydrolysis of succinyl-CoA to the synthesis of either ATP or GTP and thus represents the only step of substrate-level phosphorylation in the TCA. The beta subunit provides nucleotide specificity of the enzyme and binds the substrate succinate, while the binding sites for coenzyme A and phosphate are found in the alpha subunit. The protein is Succinate--CoA ligase [ADP-forming] subunit beta of Acinetobacter baylyi (strain ATCC 33305 / BD413 / ADP1).